A 660-amino-acid polypeptide reads, in one-letter code: Acetyl-coenzyme A synthetase (660 aa).

Residues 197–200 and T317 each bind CoA; that span reads RGGK. Residues 397 to 399, 421 to 426, D512, and R528 each bind ATP; these read GEP and DTFWQT. CoA is bound at residue S536. Residue R539 participates in ATP binding. Residues V550 and V555 each coordinate Mg(2+). An N6-acetyllysine modification is found at K625.

The protein belongs to the ATP-dependent AMP-binding enzyme family. It depends on Mg(2+) as a cofactor. Post-translationally, acetylated. Deacetylation by the SIR2-homolog deacetylase activates the enzyme.

The enzyme catalyses acetate + ATP + CoA = acetyl-CoA + AMP + diphosphate. In terms of biological role, catalyzes the conversion of acetate into acetyl-CoA (AcCoA), an essential intermediate at the junction of anabolic and catabolic pathways. AcsA undergoes a two-step reaction. In the first half reaction, AcsA combines acetate with ATP to form acetyl-adenylate (AcAMP) intermediate. In the second half reaction, it can then transfer the acetyl group from AcAMP to the sulfhydryl group of CoA, forming the product AcCoA. This chain is Acetyl-coenzyme A synthetase, found in Ralstonia nicotianae (strain ATCC BAA-1114 / GMI1000) (Ralstonia solanacearum).